Here is a 452-residue protein sequence, read N- to C-terminus: Phosphatidylserine synthase 2 (452 aa).

Residues 1-35 are Cytoplasmic-facing; that stretch reads MAKGEWKRSGADDLPLPGRSECEVFDDGTNTFFWR. A helical membrane pass occupies residues 36-56; that stretch reads AHTVTVLFILTCALVYVTLLE. The Lumenal segment spans residues 57 to 69; sequence ETPHDTAYNTKRG. The chain crosses the membrane as a helical span at residues 70 to 90; sequence IVASILVFLCFGVTQAKDGPF. The Cytoplasmic portion of the chain corresponds to 91–99; it reads TRPHPAYWR. The chain crosses the membrane as a helical span at residues 100-120; the sequence is FWLCVSVVYELFLIFILFQTV. The Lumenal segment spans residues 121–286; the sequence is HDGRQFMKYI…EWRPASNLRR (166 aa). Residues 287–307 traverse the membrane as a helical segment; sequence WLAVLGIIFMFLLAELNTFYL. Residue Lys-308 is a topological domain, cytoplasmic. Residues 309–329 form a helical membrane-spanning segment; the sequence is FVMWMPPEHYLVLFRLVFFVN. At 330 to 349 the chain is on the lumenal side; the sequence is VGGVAMREIYDFMDDPKFHK. A helical membrane pass occupies residues 350 to 370; it reads KLGQQAWIVAAITVTEFLIVV. The Cytoplasmic segment spans residues 371–376; that stretch reads KYDPNT. Residues 377–397 traverse the membrane as a helical segment; the sequence is IMLPIPFFITQCWILGIALIL. Residues 398 to 452 are Lumenal-facing; the sequence is VWTLWRFFIRDITLRYKETRRRRQEVSSERDGSSSAPSGRSKLNGSMDSVRHRKS. A disordered region spans residues 419–452; the sequence is RRQEVSSERDGSSSAPSGRSKLNGSMDSVRHRKS. The span at 430 to 444 shows a compositional bias: polar residues; sequence SSSAPSGRSKLNGSM.

It belongs to the phosphatidyl serine synthase family.

It is found in the endoplasmic reticulum membrane. It catalyses the reaction a 1,2-diacyl-sn-glycero-3-phosphoethanolamine + L-serine = a 1,2-diacyl-sn-glycero-3-phospho-L-serine + ethanolamine. The enzyme catalyses 1-hexadecanoyl-2-(9Z-octadecenoyl)-sn-glycero-3-phosphoethanolamine + L-serine = 1-hexadecanoyl-2-(9Z-octadecenoyl)-sn-glycero-3-phospho-L-serine + ethanolamine. The catalysed reaction is 1-hexadecanoyl-2-(4Z,7Z,10Z,13Z,16Z,19Z-docosahexaenoyl)-sn-glycero-3-phosphoethanolamine + L-serine = 1-hexadecanoyl-2-(4Z,7Z,10Z,13Z,16Z,19Z-docosahexaenoyl)-sn-glycero-3-phosphoserine + ethanolamine. It carries out the reaction 1-octadecanoyl-2-(5Z,8Z,11Z,14Z)-eicosatetraenoyl-sn-glycero-3-phosphoethanolamine + L-serine = 1-octadecanoyl-2-(5Z,8Z,11Z,14Z)-eicosatetraenoyl-sn-glycero-3-phosphoserine + ethanolamine. It catalyses the reaction 1-octadecanoyl-2-(4Z,7Z,10Z,13Z,16Z,19Z-docosahexaenoyl)-sn-glycero-3-phosphoethanolamine + L-serine = 1-octadecanoyl-2-(4Z,7Z,10Z,13Z,16Z,19Z-docosahexaenoyl)-sn-glycero-3-phosphoserine + ethanolamine. The enzyme catalyses 1-(1Z-octadecenyl)-2-(4Z,7Z,10Z,13Z,16Z,19Z-docosahexaenoyl)-sn-glycero-3-phosphoethanolamine + L-serine = 1-(1Z-octadecenyl)-2-(4Z,7Z,10Z,13Z,16Z,19Z-docosahexaenoyl)-sn-glycero-3-phospho-L-serine + ethanolamine. The catalysed reaction is 1-octadecanoyl-2-(9Z-octadecenoyl)-sn-glycero-3-phosphoethanolamine + L-serine = 1-octadecanoyl-2-(9Z-octadecenoyl)-sn-glycero-3-phospho-L-serine + ethanolamine. It carries out the reaction 1-(1Z-octadecenyl)-2-(9Z-octadecenoyl)-sn-glycero-3-phosphoethanolamine + L-serine = 1-(1Z-octadecenyl)-2-(9Z-octadecenoyl)-sn-glycero-3-phospho-L-serine + ethanolamine. It catalyses the reaction 1-(1Z-octadecenyl)-2-(5Z,8Z,11Z,14Z- eicosatetraenoyl)-sn-glycero-3-phosphoethanolamine + L-serine = 1-(1Z-octadecenyl)-2-(5Z,8Z,11Z,14Z-eicosatetraenoyl)-sn-glycero-3-phospho-L-serine + ethanolamine. Its pathway is phospholipid metabolism; phosphatidylserine biosynthesis. Catalyzes a base-exchange reaction in which the polar head group of phosphatidylethanolamine (PE) or phosphatidylcholine (PC) is replaced by L-serine. Catalyzes the conversion of phosphatatidylethanolamine and does not act on phosphatidylcholine. Can utilize both phosphatidylethanolamine (PE) plasmalogen and diacyl PE as substrate and the latter is six times better utilized, indicating the importance of an ester linkage at the sn-1 position. Although it shows no sn-1 fatty acyl preference, exhibits significant preference towards docosahexaenoic acid (22:6n-3) compared with 18:1 or 20:4 at the sn-2 position. In Danio rerio (Zebrafish), this protein is Phosphatidylserine synthase 2 (ptdss2).